We begin with the raw amino-acid sequence, 293 residues long: Movement protein BC1 (293 aa).

Belongs to the begomovirus movement protein BC1 family. As to quaternary structure, binds to dimeric supercoiled plasmid DNA. Post-translationally, phosphorylated.

The protein resides in the host cell membrane. The protein localises to the host microsome membrane. It localises to the host endoplasmic reticulum membrane. Its function is as follows. Transports viral genome to neighboring plant cells directly through plasmosdesmata, without any budding. The movement protein allows efficient cell to cell propagation, by bypassing the host cell wall barrier. Begomovirus genome is shuttled out of nucleus by Nuclear shuttle protein (NSP) and the movement protein transports the DNA-NSP complex to cell plasmodesmata and facilitates further movement across the cell wall. The protein is Movement protein BC1 of Cucurbita moschata (Winter crookneck squash).